Here is a 44-residue protein sequence, read N- to C-terminus: uncharacterized protein (44 aa).

This is an uncharacterized protein from His1 virus (isolate Australia/Victoria) (His1V).